The chain runs to 259 residues: Indole-3-glycerol phosphate synthase (259 aa).

It belongs to the TrpC family.

It catalyses the reaction 1-(2-carboxyphenylamino)-1-deoxy-D-ribulose 5-phosphate + H(+) = (1S,2R)-1-C-(indol-3-yl)glycerol 3-phosphate + CO2 + H2O. It participates in amino-acid biosynthesis; L-tryptophan biosynthesis; L-tryptophan from chorismate: step 4/5. This is Indole-3-glycerol phosphate synthase from Dehalococcoides mccartyi (strain ATCC BAA-2266 / KCTC 15142 / 195) (Dehalococcoides ethenogenes (strain 195)).